Reading from the N-terminus, the 122-residue chain is Pupal cuticle protein Edg-78E (122 aa).

The N-terminal stretch at 1 to 16 (MYKYLFCLALIGCACA) is a signal peptide. One can recognise a Chitin-binding type R&amp;R domain in the interval 36–96 (EGNYQYAYET…PVGDHLPTPP (61 aa)).

Imaginal (anterior) epidermis.

Component of the cuticle of the pupa of fruit fly. This Drosophila melanogaster (Fruit fly) protein is Pupal cuticle protein Edg-78E (Edg78E).